Here is a 291-residue protein sequence, read N- to C-terminus: Proline iminopeptidase (291 aa).

Residues 30 to 274 (LLIHGGPGSS…ANSRHLALLD (245 aa)) enclose the AB hydrolase-1 domain. The Nucleophile role is filled by Ser-103. Asp-242 is a catalytic residue. The active-site Proton donor is the His-269.

Belongs to the peptidase S33 family.

The protein resides in the cell envelope. The enzyme catalyses Release of N-terminal proline from a peptide.. Functionally, releases the N-terminal proline from various substrates. This Lacticaseibacillus rhamnosus (strain Lc 705) (Lactobacillus rhamnosus) protein is Proline iminopeptidase.